The sequence spans 246 residues: Osmotin-like protein OSML13 (246 aa).

The first 21 residues, Met1–Ala21, serve as a signal peptide directing secretion. Intrachain disulfides connect Cys30–Cys225, Cys72–Cys82, Cys87–Cys93, Cys141–Cys213, Cys146–Cys196, Cys154–Cys164, Cys168–Cys177, and Cys178–Cys183.

This sequence belongs to the thaumatin family.

This is Osmotin-like protein OSML13 from Solanum commersonii (Commerson's wild potato).